Here is a 304-residue protein sequence, read N- to C-terminus: MTRPRPPLGPAMAGAVDLSGIKQRAQQNAAASTDADRALSTPSGVTEITEANFEDEVIVRSDEVPVVVLLWSPRSEVCVDLLDTLSGLAAAAKGKWSLASVNVDVAPRVAQIFGVQAVPTVVALAAGQPISSFQGLQPADQLSRWVDSLLSATAGKLKGAASSEESTEVDPAVAQARQQLEDGDFVAARKSYQAILDANPGSVEAKAAIRQIEFLIRATAQRPDAVSVADSLSDDIDAAFAAADVQVLNQDVSAAFERLIALVRRTSGEERTRVRTRLIELFELFDPADPEVVAGRRNLANALY.

An N-terminal signal peptide occupies residues 1–15 (MTRPRPPLGPAMAGA). A Thioredoxin domain is found at 28-151 (NAAASTDADR…LSRWVDSLLS (124 aa)).

This is an uncharacterized protein from Mycobacterium bovis (strain ATCC BAA-935 / AF2122/97).